We begin with the raw amino-acid sequence, 297 residues long: Light-independent protochlorophyllide reductase iron-sulfur ATP-binding protein (297 aa).

Residues 41-46 (GIGKST) and Lys-70 contribute to the ATP site. Ser-45 is a Mg(2+) binding site. Positions 126 and 160 each coordinate [4Fe-4S] cluster. ATP-binding positions include 211-212 (NR) and 235-237 (PDL).

It belongs to the NifH/BchL/ChlL family. In terms of assembly, homodimer. Protochlorophyllide reductase is composed of three subunits; BchL, BchN and BchB. [4Fe-4S] cluster serves as cofactor.

The enzyme catalyses chlorophyllide a + oxidized 2[4Fe-4S]-[ferredoxin] + 2 ADP + 2 phosphate = protochlorophyllide a + reduced 2[4Fe-4S]-[ferredoxin] + 2 ATP + 2 H2O. The protein operates within porphyrin-containing compound metabolism; bacteriochlorophyll biosynthesis (light-independent). Its function is as follows. Component of the dark-operative protochlorophyllide reductase (DPOR) that uses Mg-ATP and reduced ferredoxin to reduce ring D of protochlorophyllide (Pchlide) to form chlorophyllide a (Chlide). This reaction is light-independent. The L component serves as a unique electron donor to the NB-component of the complex, and binds Mg-ATP. The sequence is that of Light-independent protochlorophyllide reductase iron-sulfur ATP-binding protein from Methylorubrum extorquens (strain PA1) (Methylobacterium extorquens).